The sequence spans 459 residues: MIVFGSKAEIHAKSILKDGEIPKRWYNILPDLPEPLSPPLDPETNETINPEKLTRIFAKELIKQEFSEKRYIKIPKEVRELYAKIGRPTPLFRATNLEKILKTPARIYFKYEGATVTGSHKINTALAQAYYAKKEGIKRLVTETGAGQWGTALSLAGALIGLKVRVYMTRASYYQKPYRKILMEIYGAEVFPSPSENTEVGKRFLREDPNHPGSLGIAISEAIEDVLSDEKARYSLGSVLNHVLMHQTVIGLEAKKQVKEFEEPDVIIGCVGGGSNFAGLSYPFIKDVLDGKAEYEFIAVEPRAVPTMTKGVYTYDYGDSAGLTPKIKMYTLGHTYYVPPIHAGGLRYHGLAPTLSVLMNHGIVKPMAYHQTEVFEAAVLFAKAEGIVPAPESAHAVRAVIDKALEAKRKGEETVILFNLSGHGLLDLKGYEDYLEGKLEDYEPQILNLSMAPRPPNAL.

The residue at position 121 (Lys-121) is an N6-(pyridoxal phosphate)lysine.

This sequence belongs to the TrpB family. Tetramer of two alpha and two beta chains. Requires pyridoxal 5'-phosphate as cofactor.

The catalysed reaction is (1S,2R)-1-C-(indol-3-yl)glycerol 3-phosphate + L-serine = D-glyceraldehyde 3-phosphate + L-tryptophan + H2O. Its pathway is amino-acid biosynthesis; L-tryptophan biosynthesis; L-tryptophan from chorismate: step 5/5. The beta subunit is responsible for the synthesis of L-tryptophan from indole and L-serine. This is Tryptophan synthase beta chain (trpB) from Pyrococcus horikoshii (strain ATCC 700860 / DSM 12428 / JCM 9974 / NBRC 100139 / OT-3).